A 928-amino-acid polypeptide reads, in one-letter code: MRFSANIAIIVNIIFLFIVVEFVLPTFIRSGDVRFRRYYRNNGRVSRAATAKKERIWPEGIIPFVIASNFSGEHQHLFLRAMRHWENFTCVSFVPRQPHHKHYITFTVDKCGCCSYVGRRGEGPQAISIGKNCDKFGIVVHELGHVVGFWHEHTRPDRDMYVDIFYKSIQTGQDYNFEKSKPEEVDSLGEPYDFSSIMHYARDTFSRGAFYDTILPKPNSGFRLEIGQRVQLSEGDIRQTKKLYKCAECGGTLMQESGNLAIQHAGVCTWHIISPQGHTIFLNITGSTLSPPSSLCGKEEDNVITVRDGVSISSPVLDRICGGDSLFRTIASSGNRMLIQVRSSTPAASLPFATYYAICGGPIYANEGVIHSPKYPESYPPNSDCQWTIHVDENSQVAIEFVYFHLEQHKECIYDRLILTEGISKNSKKDGKEMSETFCGLIEKKTIVSKTNQISLRFFSDNSVQKTGFELRFTKELNECATDKNICHHYCVNTVGGFKCACRVGYSLSSNGFSCDSTCGGYLKASNGSISSPNFPEMYPNSKTCIWEIEAPDGYHIFLNFTKFNVEGMKTECAYDYVKIGDSEKLCGEYHEALLFTTPRNRVRIEFSSDSSVERDGFFANFIADFDECQNDNAGCEHTCQNRLGSYVCTCNPGYILAEDKHNCKEGSCFFEVNAPAGDINSPNYPNDYPKGQNCSWHFVTTPGHRLMLTFSSFQVEEHAQCKYDAVSVYDGGDGSAQLAGVFCGLAPPPLLLSSSNELYLTFSSDASVSRRGFQAHYTSLCGGRLTAESTPGHIYSHATFSDSKYGKNQDCSWIVRAKSPGRGVRIQFSTFNIESEEGCQYDYIEIYDGPEATLERLVGRFCGDTSPEVITSTGPELLLIMHTDNAEEEKGFVAEYREAPRSSSTKRTFVSKTRHSPLEEPIHDRNE.

A signal peptide spans 1–30 (MRFSANIAIIVNIIFLFIVVEFVLPTFIRS). The region spanning 48 to 247 (AATAKKERIW…RQTKKLYKCA (200 aa)) is the Peptidase M12A domain. Residues asparagine 69 and asparagine 87 are each glycosylated (N-linked (GlcNAc...) asparagine). 4 disulfide bridges follow: cysteine 90/cysteine 246, cysteine 111/cysteine 133, cysteine 113/cysteine 114, and cysteine 249/cysteine 268. Histidine 141 serves as a coordination point for Zn(2+). Glutamate 142 is an active-site residue. Residues histidine 145 and histidine 151 each coordinate Zn(2+). CUB domains lie at 249–359 (CGGT…YAIC) and 360–476 (GGPI…FTKE). Asparagine 283 carries N-linked (GlcNAc...) asparagine glycosylation. Intrachain disulfides connect cysteine 359–cysteine 385, cysteine 412–cysteine 439, cysteine 480–cysteine 491, cysteine 487–cysteine 500, cysteine 502–cysteine 515, and cysteine 519–cysteine 545. Residues 477 to 516 (LNECATDKNICHHYCVNTVGGFKCACRVGYSLSSNGFSCD) form the EGF-like 1; calcium-binding domain. The region spanning 519–625 (CGGYLKASNG…DGFFANFIAD (107 aa)) is the CUB 3 domain. Asparagine 527 and asparagine 560 each carry an N-linked (GlcNAc...) asparagine glycan. Cystine bridges form between cysteine 573/cysteine 587, cysteine 629/cysteine 640, cysteine 636/cysteine 649, cysteine 651/cysteine 664, cysteine 669/cysteine 695, cysteine 722/cysteine 744, cysteine 782/cysteine 812, and cysteine 840/cysteine 863. Positions 626-665 (FDECQNDNAGCEHTCQNRLGSYVCTCNPGYILAEDKHNCK) constitute an EGF-like 2; calcium-binding domain. 2 consecutive CUB domains span residues 669–781 (CFFE…YTSL) and 782–900 (CGGR…YREA). Asparagine 694 carries an N-linked (GlcNAc...) asparagine glycan. The segment at 895–928 (AEYREAPRSSSTKRTFVSKTRHSPLEEPIHDRNE) is disordered. Positions 902-912 (RSSSTKRTFVS) are enriched in polar residues. Positions 917-928 (SPLEEPIHDRNE) are enriched in basic and acidic residues.

The cofactor is Zn(2+). Expressed in pharyngeal, vulva and body wall muscles, intestine and several neurons.

Its subcellular location is the secreted. Metalloprotease. This Caenorhabditis elegans protein is Zinc metalloproteinase nas-39.